Here is a 334-residue protein sequence, read N- to C-terminus: Holliday junction branch migration complex subunit RuvB (334 aa).

Positions 4–186 (ADRLIAPENP…FGITQRLEYY (183 aa)) are large ATPase domain (RuvB-L). ATP-binding positions include Ile25, Arg26, Gly67, Lys70, Thr71, Thr72, 133-135 (EDY), Arg176, Tyr186, and Arg223. Residue Thr71 coordinates Mg(2+). The small ATPAse domain (RuvB-S) stretch occupies residues 187–257 (KVQDLQNIVQ…VADKALNMLD (71 aa)). The interval 260 to 334 (AQGFDYMDRK…RAYLHFGIEK (75 aa)) is head domain (RuvB-H). 2 residues coordinate DNA: Arg315 and Arg320.

This sequence belongs to the RuvB family. Homohexamer. Forms an RuvA(8)-RuvB(12)-Holliday junction (HJ) complex. HJ DNA is sandwiched between 2 RuvA tetramers; dsDNA enters through RuvA and exits via RuvB. An RuvB hexamer assembles on each DNA strand where it exits the tetramer. Each RuvB hexamer is contacted by two RuvA subunits (via domain III) on 2 adjacent RuvB subunits; this complex drives branch migration. In the full resolvosome a probable DNA-RuvA(4)-RuvB(12)-RuvC(2) complex forms which resolves the HJ.

The protein localises to the cytoplasm. It carries out the reaction ATP + H2O = ADP + phosphate + H(+). The RuvA-RuvB-RuvC complex processes Holliday junction (HJ) DNA during genetic recombination and DNA repair, while the RuvA-RuvB complex plays an important role in the rescue of blocked DNA replication forks via replication fork reversal (RFR). RuvA specifically binds to HJ cruciform DNA, conferring on it an open structure. The RuvB hexamer acts as an ATP-dependent pump, pulling dsDNA into and through the RuvAB complex. RuvB forms 2 homohexamers on either side of HJ DNA bound by 1 or 2 RuvA tetramers; 4 subunits per hexamer contact DNA at a time. Coordinated motions by a converter formed by DNA-disengaged RuvB subunits stimulates ATP hydrolysis and nucleotide exchange. Immobilization of the converter enables RuvB to convert the ATP-contained energy into a lever motion, pulling 2 nucleotides of DNA out of the RuvA tetramer per ATP hydrolyzed, thus driving DNA branch migration. The RuvB motors rotate together with the DNA substrate, which together with the progressing nucleotide cycle form the mechanistic basis for DNA recombination by continuous HJ branch migration. Branch migration allows RuvC to scan DNA until it finds its consensus sequence, where it cleaves and resolves cruciform DNA. The protein is Holliday junction branch migration complex subunit RuvB of Vibrio parahaemolyticus serotype O3:K6 (strain RIMD 2210633).